The following is a 358-amino-acid chain: GTPase Obg (358 aa).

One can recognise an Obg domain in the interval 1–159 (MKFLDEAKVY…RWIWLRLKLI (159 aa)). The OBG-type G domain maps to 160–327 (ADAGLVGLPN…VLRALVEVIG (168 aa)). GTP is bound by residues 166-173 (GLPNAGKS), 191-195 (FTTLH), 212-215 (DIPG), 279-282 (NKID), and 308-310 (SGV). Residues Ser173 and Thr193 each contribute to the Mg(2+) site. Residues 335 to 358 (AKGADASAAQAMETPVARAKPWSP) are disordered.

The protein belongs to the TRAFAC class OBG-HflX-like GTPase superfamily. OBG GTPase family. As to quaternary structure, monomer. The cofactor is Mg(2+).

The protein localises to the cytoplasm. In terms of biological role, an essential GTPase which binds GTP, GDP and possibly (p)ppGpp with moderate affinity, with high nucleotide exchange rates and a fairly low GTP hydrolysis rate. Plays a role in control of the cell cycle, stress response, ribosome biogenesis and in those bacteria that undergo differentiation, in morphogenesis control. The polypeptide is GTPase Obg (Nitrobacter winogradskyi (strain ATCC 25391 / DSM 10237 / CIP 104748 / NCIMB 11846 / Nb-255)).